A 334-amino-acid polypeptide reads, in one-letter code: Protein-methionine-sulfoxide reductase catalytic subunit MsrP (334 aa).

A signal peptide (tat-type signal) is located at residues 1–44 (MKKNQFLKESDVTAESVFFMKRRQVLKALGISAAALSLPHAAHA). Mo-molybdopterin is bound by residues asparagine 88, 91 to 92 (YE), cysteine 146, threonine 181, asparagine 233, arginine 238, and 249 to 251 (GIK).

It belongs to the MsrP family. Heterodimer of a catalytic subunit (MsrP) and a heme-binding subunit (MsrQ). The cofactor is Mo-molybdopterin. In terms of processing, predicted to be exported by the Tat system. The position of the signal peptide cleavage has not been experimentally proven.

It localises to the periplasm. The catalysed reaction is L-methionyl-[protein] + a quinone + H2O = L-methionyl-(S)-S-oxide-[protein] + a quinol. It carries out the reaction L-methionyl-[protein] + a quinone + H2O = L-methionyl-(R)-S-oxide-[protein] + a quinol. Functionally, part of the MsrPQ system that repairs oxidized periplasmic proteins containing methionine sulfoxide residues (Met-O), using respiratory chain electrons. Thus protects these proteins from oxidative-stress damage caused by reactive species of oxygen and chlorine generated by the host defense mechanisms. MsrPQ is essential for the maintenance of envelope integrity under bleach stress, rescuing a wide series of structurally unrelated periplasmic proteins from methionine oxidation, including the primary periplasmic chaperone SurA and the lipoprotein Pal. The catalytic subunit MsrP is non-stereospecific, being able to reduce both (R-) and (S-) diastereoisomers of methionine sulfoxide. The polypeptide is Protein-methionine-sulfoxide reductase catalytic subunit MsrP (Escherichia coli O17:K52:H18 (strain UMN026 / ExPEC)).